Consider the following 185-residue polypeptide: Ribosome-recycling factor (185 aa).

A disordered region spans residues 139-159; it reads IDSLEKDGDVSGDEADRAKKK. The segment covering 141–159 has biased composition (basic and acidic residues); it reads SLEKDGDVSGDEADRAKKK.

Belongs to the RRF family.

It is found in the cytoplasm. In terms of biological role, responsible for the release of ribosomes from messenger RNA at the termination of protein biosynthesis. May increase the efficiency of translation by recycling ribosomes from one round of translation to another. This chain is Ribosome-recycling factor, found in Sorangium cellulosum (strain So ce56) (Polyangium cellulosum (strain So ce56)).